The following is a 149-amino-acid chain: Transcription antitermination protein NusB (149 aa).

Belongs to the NusB family.

Its function is as follows. Involved in transcription antitermination. Required for transcription of ribosomal RNA (rRNA) genes. Binds specifically to the boxA antiterminator sequence of the ribosomal RNA (rrn) operons. The polypeptide is Transcription antitermination protein NusB (Chromobacterium violaceum (strain ATCC 12472 / DSM 30191 / JCM 1249 / CCUG 213 / NBRC 12614 / NCIMB 9131 / NCTC 9757 / MK)).